Consider the following 312-residue polypeptide: Methionyl-tRNA formyltransferase (312 aa).

(6S)-5,6,7,8-tetrahydrofolate is bound at residue 112–115; it reads SLLP.

The protein belongs to the Fmt family.

It carries out the reaction L-methionyl-tRNA(fMet) + (6R)-10-formyltetrahydrofolate = N-formyl-L-methionyl-tRNA(fMet) + (6S)-5,6,7,8-tetrahydrofolate + H(+). In terms of biological role, attaches a formyl group to the free amino group of methionyl-tRNA(fMet). The formyl group appears to play a dual role in the initiator identity of N-formylmethionyl-tRNA by promoting its recognition by IF2 and preventing the misappropriation of this tRNA by the elongation apparatus. This is Methionyl-tRNA formyltransferase from Magnetococcus marinus (strain ATCC BAA-1437 / JCM 17883 / MC-1).